The following is a 910-amino-acid chain: Ubiquitin carboxyl-terminal hydrolase 9 (910 aa).

A DUSP domain is found at 19–134 (TTPEEEKRIV…GGPPIERKLI (116 aa)). Positions 68-89 (ISGESSEASRPGPIDNHDIIES) are disordered. In terms of domain architecture, USP spans 303 to 894 (AGLSNLGNTC…AAYVLFYRRV (592 aa)). Catalysis depends on cysteine 312, which acts as the Nucleophile. Catalysis depends on histidine 852, which acts as the Proton acceptor.

This sequence belongs to the peptidase C19 family.

The catalysed reaction is Thiol-dependent hydrolysis of ester, thioester, amide, peptide and isopeptide bonds formed by the C-terminal Gly of ubiquitin (a 76-residue protein attached to proteins as an intracellular targeting signal).. Functionally, recognizes and hydrolyzes the peptide bond at the C-terminal Gly of ubiquitin. Involved in the processing of poly-ubiquitin precursors as well as that of ubiquitinated proteins. The chain is Ubiquitin carboxyl-terminal hydrolase 9 (UBP9) from Arabidopsis thaliana (Mouse-ear cress).